Consider the following 440-residue polypeptide: Xaa-Pro dipeptidase (440 aa).

Mn(2+) is bound by residues aspartate 244, aspartate 255, histidine 335, glutamate 380, and glutamate 419.

Belongs to the peptidase M24B family. Bacterial-type prolidase subfamily. Requires Mn(2+) as cofactor.

The enzyme catalyses Xaa-L-Pro dipeptide + H2O = an L-alpha-amino acid + L-proline. In terms of biological role, splits dipeptides with a prolyl residue in the C-terminal position. This is Xaa-Pro dipeptidase from Shewanella putrefaciens (strain CN-32 / ATCC BAA-453).